An 834-amino-acid chain; its full sequence is Dual specificity calcium/calmodulin-dependent 3',5'-cyclic nucleotide phosphodiesterase 1 (834 aa).

Residues 152 to 338 are disordered; sequence HSHGRDDQQQ…DELSEVQPDA (187 aa). The segment covering 207–222 has biased composition (low complexity); the sequence is THSGPTGPPSNTSSET. Basic and acidic residues predominate over residues 236–252; it reads TVRESVMEESPSKDPGD. Over residues 260–301 the composition is skewed to low complexity; sequence STSTLTSQTTTSSSATAEPSAKAAESQAGSAGSSGSCSNPAA. Residues 313–322 show a composition bias toward polar residues; that stretch reads WARSMSTNKT. The segment at 364–387 is calmodulin-binding; sequence EKPKFRSVAHAIRAGIFVDRMYRR. The PDEase domain maps to 392 to 786; it reads ALTAFPPDVV…RIWKEQAVKD (395 aa). The active-site Proton donor is the His-469. Residues His-473, His-509, Asp-510, and Asp-617 each contribute to the Zn(2+) site. Residue Asp-510 coordinates Mg(2+). 2 disordered regions span residues 720 to 744 and 797 to 834; these read IVIP…AKTT and EEAA…GAAA. The span at 732-741 shows a compositional bias: basic and acidic residues; the sequence is DKPRDHRTEA. Over residues 823–834 the composition is skewed to low complexity; that stretch reads EPAAEPADGAAA.

Belongs to the cyclic nucleotide phosphodiesterase family. PDE1 subfamily. Requires Zn(2+) as cofactor. Mg(2+) serves as cofactor. In terms of tissue distribution, expressed in the head (at protein level). Expressed in Malpighian tubules. Expressed in neurons in the brain and ventral ganglia with male flies having higher levels of expression in the abdominal ganglia compared to female flies.

It carries out the reaction a nucleoside 3',5'-cyclic phosphate + H2O = a nucleoside 5'-phosphate + H(+). It catalyses the reaction 3',5'-cyclic GMP + H2O = GMP + H(+). The catalysed reaction is 3',5'-cyclic AMP + H2O = AMP + H(+). Its activity is regulated as follows. Type I PDE are activated by the binding of calmodulin in the presence of Ca(2+). Inhibited by zaprinast and sildenafil. Functionally, cyclic nucleotide phosphodiesterase with a dual specificity for the second messengers cAMP and cGMP, which are key regulators of many important physiological processes. Required for male fertility and male mating behavior. The protein is Dual specificity calcium/calmodulin-dependent 3',5'-cyclic nucleotide phosphodiesterase 1 of Drosophila melanogaster (Fruit fly).